A 226-amino-acid chain; its full sequence is Endonuclease NucS (226 aa).

This sequence belongs to the NucS endonuclease family.

The protein resides in the cytoplasm. Cleaves both 3' and 5' ssDNA extremities of branched DNA structures. This is Endonuclease NucS from Mycobacterium tuberculosis (strain ATCC 25618 / H37Rv).